We begin with the raw amino-acid sequence, 257 residues long: Neurotrophin-3 (257 aa).

The first 18 residues, 1–18, serve as a signal peptide directing secretion; it reads MSILFYVIFLAYLRGIQS. Residues 19 to 138 constitute a propeptide that is removed on maturation; the sequence is TNMDQRSLPE…VLNRTSRRKR (120 aa). Residue asparagine 131 is glycosylated (N-linked (GlcNAc...) asparagine). 3 cysteine pairs are disulfide-bonded: cysteine 152–cysteine 217, cysteine 195–cysteine 246, and cysteine 205–cysteine 248.

Belongs to the NGF-beta family. As to expression, in the embryo, the expression peak at E4.5 and decreases at later stages of development.

It localises to the secreted. Seems to promote the survival of visceral and proprioceptive sensory neurons. In Gallus gallus (Chicken), this protein is Neurotrophin-3 (NTF3).